The following is a 162-amino-acid chain: MTDLYIDADACPVKAEAERVAVRHGVRMFLVSNGGIRPPAHPLVESIFVPEGPDVADMWIADRARTGDVVVTSDIPLAAKVVAAGALVVKPNGETLTQANIGNALATRDLMADLRSADPFRQGSGRPFSKADRSRFLDALERAMRKAQEAGRSASGGSEAGS.

The protein belongs to the UPF0178 family.

This Cereibacter sphaeroides (strain KD131 / KCTC 12085) (Rhodobacter sphaeroides) protein is UPF0178 protein RSKD131_2223.